The chain runs to 286 residues: Putative short-chain type dehydrogenase/reductase Rv0148 (286 aa).

Residue 11–35 (VTGAGGGLGREYALTLAGEGASVVV) participates in NAD(+) binding. A substrate-binding site is contributed by Ser151. Tyr164 functions as the Proton acceptor in the catalytic mechanism. Residue Lys280 forms an Isoglutamyl lysine isopeptide (Lys-Gln) (interchain with Q-Cter in protein Pup) linkage.

The protein belongs to the short-chain dehydrogenases/reductases (SDR) family. Post-translationally, pupylated at Lys-280 by the prokaryotic ubiquitin-like protein Pup, which probably leads to its degradation by the proteasome.

The sequence is that of Putative short-chain type dehydrogenase/reductase Rv0148 from Mycobacterium tuberculosis (strain ATCC 25618 / H37Rv).